The sequence spans 908 residues: Translation initiation factor IF-2 (908 aa).

Disordered regions lie at residues 123-154 (EEPPILQPELPTEEKEELEVIESPQAPQEELK) and 212-278 (KKEP…VSEK). One can recognise a tr-type G domain in the interval 407 to 577 (ERAPIVTIMG…LFEAELLELK (171 aa)). The tract at residues 416–423 (GHVDHGKT) is G1. 416 to 423 (GHVDHGKT) serves as a coordination point for GTP. The tract at residues 441–445 (GITQH) is G2. The tract at residues 463 to 466 (DTPG) is G3. Residues 463-467 (DTPGH) and 517-520 (NKMD) each bind GTP. Residues 517 to 520 (NKMD) form a G4 region. The G5 stretch occupies residues 553–555 (SAI).

This sequence belongs to the TRAFAC class translation factor GTPase superfamily. Classic translation factor GTPase family. IF-2 subfamily.

It is found in the cytoplasm. One of the essential components for the initiation of protein synthesis. Protects formylmethionyl-tRNA from spontaneous hydrolysis and promotes its binding to the 30S ribosomal subunits. Also involved in the hydrolysis of GTP during the formation of the 70S ribosomal complex. This is Translation initiation factor IF-2 from Amoebophilus asiaticus (strain 5a2).